The chain runs to 1234 residues: Chromosome-associated kinesin KIF4B (1234 aa).

In terms of domain architecture, Kinesin motor spans 9-336; sequence PVRVALRCRP…LRYADRARKI (328 aa). 88–95 is a binding site for ATP; that stretch reads GQTGSGKT. A coiled-coil region spans residues 350–999; sequence ELNHLKQQVQ…IKQKLILLQV (650 aa). At serine 394 the chain carries Phosphoserine. Disordered stretches follow at residues 494 to 513 and 712 to 737; these read EEAQ…AFTT and KRLK…HGKE. A compositionally biased stretch (polar residues) spans 498–513; the sequence is VETSPETSRSSDAFTT. Residues 663–1234 form an interaction with PRC1 region; sequence QWKQKKDKEV…GCSPIEEEAH (572 aa). Residues 713–737 are compositionally biased toward basic and acidic residues; that stretch reads RLKDALQKQREVTDKRKETQSHGKE. The Nuclear localization signal signature appears at 793 to 798; that stretch reads PKLRKC. Residue threonine 799 is modified to Phosphothreonine. Residues serine 801, serine 951, serine 1001, serine 1013, serine 1017, and serine 1028 each carry the phosphoserine modification. The segment at 1000 to 1234 is globular; the sequence is ASRQKHLPND…GCSPIEEEAH (235 aa). 4 disordered regions span residues 1007–1030, 1052–1076, 1122–1143, and 1183–1234; these read PNDT…PSRV, VNEH…KPTK, RQQG…GSFK, and TAPA…EEAH. The segment covering 1056–1071 has biased composition (acidic residues); that stretch reads EDGDGDGDSDEGDDEE. Residues 1086–1144 are CRD; required for [4Fe-4S] cluster binding and localization to the spindle midzone and midbody during anaphase and telophase; the sequence is QGCSCKGWCGNKQCGCRKQKSDCGVDCSCDPTKCRNRQQGKDSLGTVEQTQDSEGSFKL. At serine 1128 the chain carries Phosphoserine. Phosphothreonine is present on threonine 1183. Residue serine 1188 is modified to Phosphoserine. Residue lysine 1196 forms a Glycyl lysine isopeptide (Lys-Gly) (interchain with G-Cter in SUMO2) linkage. Serine 1227 is subject to Phosphoserine.

This sequence belongs to the TRAFAC class myosin-kinesin ATPase superfamily. Kinesin family. Chromokinesin subfamily. [2Fe-2S] cluster serves as cofactor. It depends on [4Fe-4S] cluster as a cofactor. Specifically expressed in testis.

The protein resides in the nucleus matrix. The protein localises to the cytoplasm. Its subcellular location is the cytoskeleton. In terms of biological role, iron-sulfur (Fe-S) cluster binding motor protein that has a role in chromosome segregation during mitosis. Translocates PRC1 to the plus ends of interdigitating spindle microtubules during the metaphase to anaphase transition, an essential step for the formation of an organized central spindle midzone and midbody and for successful cytokinesis. May play a role in mitotic chromosomal positioning and bipolar spindle stabilization. The sequence is that of Chromosome-associated kinesin KIF4B (KIF4B) from Homo sapiens (Human).